Here is a 471-residue protein sequence, read N- to C-terminus: Tetratricopeptide repeat protein 29 (471 aa).

7 TPR repeats span residues 92 to 131 (DKLP…EAAE), 136 to 173 (YEEV…AQLI), 182 to 215 (AEAE…THGR), 234 to 267 (VRTY…AREG), 274 to 307 (GEAS…STSL), 314 to 347 (GRAY…ARNN), and 354 to 387 (IRAC…AMEL). Positions 449 to 471 (ATEDNIYQLPDAEEETRRSPENQ) are disordered.

In terms of tissue distribution, expressed in spermatozoa (at protein level).

The protein resides in the cytoplasm. It localises to the cytoskeleton. Its subcellular location is the flagellum axoneme. Its function is as follows. Axonemal protein which is implicated in axonemal and/or peri-axonemal structure assembly and regulates flagellum assembly and beating and therefore sperm motility. The protein is Tetratricopeptide repeat protein 29 (Ttc29) of Mus musculus (Mouse).